The primary structure comprises 740 residues: ATP-dependent RNA helicase DDX1 (740 aa).

Positions 1-295 (MAAFSEMGVM…APKALIVEPS (295 aa)) are necessary for interaction with HNRNPK. Residues 1–448 (MAAFSEMGVM…DTVHHVVVPV (448 aa)) are interaction with dsRNA. Positions 1-525 (MAAFSEMGVM…KIDCDNLEQY (525 aa)) are necessary for interaction with RELA. Residues 2–428 (AAFSEMGVMP…SEKIMHFPTW (427 aa)) enclose the Helicase ATP-binding domain. Position 46 to 53 (46 to 53 (AETGSGKT)) interacts with ATP. One can recognise a B30.2/SPRY domain in the interval 70–247 (DQQEGKKGKT…LKFNFGEEEF (178 aa)). N6-acetyllysine is present on residues K239 and K268. An N6-acetyllysine; alternate modification is found at K281. K281 is covalently cross-linked (Glycyl lysine isopeptide (Lys-Gly) (interchain with G-Cter in SUMO2); alternate). The short motif at 370–373 (DEAD) is the DEAD box element. Residue S481 is modified to Phosphoserine. One can recognise a Helicase C-terminal domain in the interval 493–681 (KGEYAVRAIK…QVEPDIKVPV (189 aa)). A necessary for interaction with HNRNPK region spans residues 525–740 (YFMQQGGGPD…YLPNQLFRTF (216 aa)).

The protein belongs to the DEAD box helicase family. DDX1 subfamily. Found in a multi-helicase-TICAM1 complex at least composed of DHX36, DDX1, DDX21 and TICAM1; this complex exists in resting cells with or without poly(I:C) RNA ligand stimulation. Interacts with DHX36. Interacts (via B30.2/SPRY domain) with DDX21 (via N-terminus); this interaction serves as bridges to TICAM1. Interacts with FAM98A (via N- and C-terminus). Interacts with MBNL1. Interacts with CSTF2. Interacts with HNRNPK. Interacts with ATM. Interacts with RELA (via C-terminus). Component of the tRNA-splicing ligase complex. Interacts with PHF5A (via C-terminus). Interacts with PQBP1. Interacts with ERCC6. Post-translationally, phosphorylated by ATM kinase; phosphorylation is increased in response to ionizing radiation (IR). As to expression, testis-specific. Expressed in the germ line stem cells, spermatogonia and spermatocytes of the testis. Also expressed in the seminoma and nonseminoma types of testicular germ cell tumors (TGCTs) (at protein level).

It localises to the nucleus. It is found in the cytoplasm. The protein localises to the cytosol. The protein resides in the cytoplasmic granule. Its subcellular location is the mitochondrion. The catalysed reaction is ATP + H2O = ADP + phosphate + H(+). Functionally, acts as an ATP-dependent RNA helicase, able to unwind both RNA-RNA and RNA-DNA duplexes. Possesses 5' single-stranded RNA overhang nuclease activity. Possesses ATPase activity on various RNA, but not DNA polynucleotides. May play a role in RNA clearance at DNA double-strand breaks (DSBs), thereby facilitating the template-guided repair of transcriptionally active regions of the genome. Together with RELA, acts as a coactivator to enhance NF-kappa-B-mediated transcriptional activation. Acts as a positive transcriptional regulator of cyclin CCND2 expression. Binds to the cyclin CCND2 promoter region. Associates with chromatin at the NF-kappa-B promoter region via association with RELA. Binds to poly(A) RNA. May be involved in 3'-end cleavage and polyadenylation of pre-mRNAs. Component of the tRNA-splicing ligase complex required to facilitate the enzymatic turnover of catalytic subunit RTCB: together with archease (ZBTB8OS), acts by facilitating the guanylylation of RTCB, a key intermediate step in tRNA ligation. Component of a multi-helicase-TICAM1 complex that acts as a cytoplasmic sensor of viral double-stranded RNA (dsRNA) and plays a role in the activation of a cascade of antiviral responses including the induction of pro-inflammatory cytokines via the adapter molecule TICAM1. Specifically binds (via helicase ATP-binding domain) on both short and long poly(I:C) dsRNA. This Mus musculus (Mouse) protein is ATP-dependent RNA helicase DDX1 (Ddx1).